We begin with the raw amino-acid sequence, 172 residues long: Nicotinamide-nucleotide adenylyltransferase (172 aa).

Belongs to the archaeal NMN adenylyltransferase family.

It localises to the cytoplasm. The enzyme catalyses beta-nicotinamide D-ribonucleotide + ATP + H(+) = diphosphate + NAD(+). Its pathway is cofactor biosynthesis; NAD(+) biosynthesis; NAD(+) from nicotinamide D-ribonucleotide: step 1/1. The chain is Nicotinamide-nucleotide adenylyltransferase from Methanococcus vannielii (strain ATCC 35089 / DSM 1224 / JCM 13029 / OCM 148 / SB).